The sequence spans 280 residues: MFLLGSGGKHFEDELRNAGAKILEVEIKRFPDGEKYVRVMGNGDEATVVSSTFYPQDEKIVELLLLGDALREKGFEKLKLVVPYFAYSRQDRVTKDGEPISVRAVMRALGIYYEELYIFDTHNPETLRFFPGKAVNVSPARVIGEYFREKLGDGLVLAPDKGALERARAVAEVLGLEYSHFEKRRISPTEVEMHPVDVDVKGKNVLIVDDIISTGGTMVRAAELLRKLGAKKIYVSATHGVFAEGAIERVSRAVDELAVTNTIPTPVSRISIVPELLKLE.

ATP-binding positions include 32-34 and 89-90; these read DGE and RQ. Mg(2+) is bound by residues histidine 122 and aspartate 160. Lysine 183 is a catalytic residue. D-ribose 5-phosphate-binding positions include arginine 185, aspartate 209, and 213–217; that span reads STGGT.

It belongs to the ribose-phosphate pyrophosphokinase family. Class III (archaeal) subfamily. Requires Mg(2+) as cofactor.

It localises to the cytoplasm. It carries out the reaction D-ribose 5-phosphate + ATP = 5-phospho-alpha-D-ribose 1-diphosphate + AMP + H(+). The protein operates within metabolic intermediate biosynthesis; 5-phospho-alpha-D-ribose 1-diphosphate biosynthesis; 5-phospho-alpha-D-ribose 1-diphosphate from D-ribose 5-phosphate (route I): step 1/1. With respect to regulation, activated by Co(2+) and Ni(2+) ions, however Mg(2+) ion shows almost no significant effect on the activity. Equally inhibited by ADP, CTP and GTP, while dTTP and UTP are less inhibitory. In terms of biological role, involved in the biosynthesis of the central metabolite phospho-alpha-D-ribosyl-1-pyrophosphate (PRPP) via the transfer of pyrophosphoryl group from ATP to 1-hydroxyl of ribose-5-phosphate (Rib-5-P). It can also use CTP and GTP as substrates in addition to ATP. In Thermococcus kodakarensis (strain ATCC BAA-918 / JCM 12380 / KOD1) (Pyrococcus kodakaraensis (strain KOD1)), this protein is Ribose-phosphate pyrophosphokinase.